We begin with the raw amino-acid sequence, 171 residues long: Large ribosomal subunit protein uL22 (171 aa).

Belongs to the universal ribosomal protein uL22 family.

The polypeptide is Large ribosomal subunit protein uL22 (RPL17) (Zea mays (Maize)).